The chain runs to 471 residues: Cysteine--tRNA ligase (471 aa).

Cys-29 contributes to the Zn(2+) binding site. Positions 31–41 match the 'HIGH' region motif; sequence PTVYNYIHIGN. Cys-209, His-234, and Glu-238 together coordinate Zn(2+). A 'KMSKS' region motif is present at residues 266 to 270; that stretch reads KMSKS. Lys-269 contacts ATP.

It belongs to the class-I aminoacyl-tRNA synthetase family. Monomer. The cofactor is Zn(2+).

The protein resides in the cytoplasm. The catalysed reaction is tRNA(Cys) + L-cysteine + ATP = L-cysteinyl-tRNA(Cys) + AMP + diphosphate. This Listeria monocytogenes serotype 4b (strain CLIP80459) protein is Cysteine--tRNA ligase.